Here is a 219-residue protein sequence, read N- to C-terminus: Protein-L-isoaspartate O-methyltransferase (219 aa).

Residue serine 66 is part of the active site.

Belongs to the methyltransferase superfamily. L-isoaspartyl/D-aspartyl protein methyltransferase family.

Its subcellular location is the cytoplasm. The catalysed reaction is [protein]-L-isoaspartate + S-adenosyl-L-methionine = [protein]-L-isoaspartate alpha-methyl ester + S-adenosyl-L-homocysteine. In terms of biological role, catalyzes the methyl esterification of L-isoaspartyl residues in peptides and proteins that result from spontaneous decomposition of normal L-aspartyl and L-asparaginyl residues. It plays a role in the repair and/or degradation of damaged proteins. In Xanthobacter autotrophicus (strain ATCC BAA-1158 / Py2), this protein is Protein-L-isoaspartate O-methyltransferase.